The chain runs to 356 residues: MAALTSYEMAASILLCAEDSSSVLGFGGEEEEEEEDVVAGKRARCAGPPPPPCVDVAGVDFAVPSEECVARLVETEADHMPREDYAERLRAGGGDGDLDLRVRMDAIDWIWKVHSYYSFAPLTACLAVNYLDRFLSLYQLPDGKDWMTQLLAVACLSLAAKMEETDVPQSLDLQVGEERYVFEAKTIQRMELLVLSTLKWRMQAVTPFSYVDYFLRELNGGDPPSGRSALLSSELILCIARGTECLGFRPSEIAAAVAAAVVGEEHAAFSHVNKERMSHCQEVIQAMELIHPKPSSPSRVFVSSSIPRSPTGVLDAAGCLSYRSDDSAVASHYAASSWGYEHDSSPVSSKRRKISR.

Belongs to the cyclin family. Cyclin D subfamily.

This chain is Cyclin-D4-1 (CYCD4-1), found in Oryza sativa subsp. japonica (Rice).